Here is a 129-residue protein sequence, read N- to C-terminus: Holo-[acyl-carrier-protein] synthase (129 aa).

The Mg(2+) site is built by D8 and E58.

Belongs to the P-Pant transferase superfamily. AcpS family. The cofactor is Mg(2+).

The protein resides in the cytoplasm. The enzyme catalyses apo-[ACP] + CoA = holo-[ACP] + adenosine 3',5'-bisphosphate + H(+). Its function is as follows. Transfers the 4'-phosphopantetheine moiety from coenzyme A to a Ser of acyl-carrier-protein. The polypeptide is Holo-[acyl-carrier-protein] synthase (Geobacillus kaustophilus (strain HTA426)).